Reading from the N-terminus, the 369-residue chain is Protein VP6 (369 aa).

The tract at residues 20 to 208 (LEQRSIAPLL…EEAKVGGGDR (189 aa)) is disordered. The segment covering 29–66 (LREKNSTEAKSKLKEDGEKKNKSEKEENKIHDDRRVES) has biased composition (basic and acidic residues). Composition is skewed to gly residues over residues 92–111 (TGGG…GGVG) and 162–171 (TSGGLQGRGG). Over residues 196 to 208 (TEGEEAKVGGGDR) the composition is skewed to basic and acidic residues.

The protein belongs to the orbivirus VP6 family.

It is found in the virion. This African horse sickness virus 3 (AHSV-3) protein is Protein VP6 (S9).